Consider the following 261-residue polypeptide: Probable membrane transporter protein ORF9 (261 aa).

A run of 8 helical transmembrane segments spans residues 8 to 28, 29 to 49, 78 to 98, 100 to 120, 133 to 151, 152 to 171, 189 to 209, and 231 to 251; these read LLAF…IAGG, GGMI…QTLG, LPMA…ATIV, GDVL…YFGL, VTPF…FYDG, VFGP…LAGF, VGAF…GLLM, and IIKP…LADP.

The protein belongs to the 4-toluene sulfonate uptake permease (TSUP) (TC 2.A.102) family.

Its subcellular location is the cell membrane. The sequence is that of Probable membrane transporter protein ORF9 from Sinorhizobium sp.